Here is a 468-residue protein sequence, read N- to C-terminus: Glutamate--tRNA ligase (468 aa).

The 'HIGH' region motif lies at 11 to 21; it reads PSPTGFIHLGN. Residues 243 to 247 carry the 'KMSKS' region motif; that stretch reads KMSKR. Lysine 246 is a binding site for ATP.

This sequence belongs to the class-I aminoacyl-tRNA synthetase family. Glutamate--tRNA ligase type 1 subfamily. Monomer.

The protein resides in the cytoplasm. The enzyme catalyses tRNA(Glu) + L-glutamate + ATP = L-glutamyl-tRNA(Glu) + AMP + diphosphate. Its function is as follows. Catalyzes the attachment of glutamate to tRNA(Glu) in a two-step reaction: glutamate is first activated by ATP to form Glu-AMP and then transferred to the acceptor end of tRNA(Glu). The protein is Glutamate--tRNA ligase of Delftia acidovorans (strain DSM 14801 / SPH-1).